The primary structure comprises 142 residues: MSGPRLLLGFDYGTRQIGVAVGQAITGQARELCVLKAQNGVPDWSRVEQLVKEWRPDAMVVGLPLNMDGTPSEMSERAERFARRLHGRFGLPVHTHDERLTTFEAKGYRLAQGQRDGYRRRPVDALAAALLLEGWLAERPAG.

The protein belongs to the YqgF nuclease family.

The protein localises to the cytoplasm. In terms of biological role, could be a nuclease involved in processing of the 5'-end of pre-16S rRNA. This chain is Putative pre-16S rRNA nuclease, found in Azotobacter vinelandii (strain DJ / ATCC BAA-1303).